The primary structure comprises 102 residues: RNA-binding protein Hfq (102 aa).

Residues D9–V68 enclose the Sm domain. Residues V63–E102 are disordered. Positions H70–Q96 are enriched in polar residues.

It belongs to the Hfq family. Homohexamer.

Its function is as follows. RNA chaperone that binds small regulatory RNA (sRNAs) and mRNAs to facilitate mRNA translational regulation in response to envelope stress, environmental stress and changes in metabolite concentrations. Also binds with high specificity to tRNAs. The protein is RNA-binding protein Hfq of Shigella boydii serotype 18 (strain CDC 3083-94 / BS512).